A 353-amino-acid polypeptide reads, in one-letter code: 2-Hydroxyacid oxidase 2 (353 aa).

Positions 2–353 (PLVCLTDFRE…NQDLIQFSRL (352 aa)) constitute an FMN hydroxy acid dehydrogenase domain. FMN-binding positions include 77 to 79 (PTG), serine 106, and glutamine 128. Tyrosine 130 is a binding site for a 2-oxocarboxylate. Threonine 156 is an FMN binding site. A 2-oxocarboxylate is bound at residue arginine 165. Lysine 224 provides a ligand contact to FMN. The active-site Proton acceptor is histidine 248. Arginine 251 provides a ligand contact to a 2-oxocarboxylate. FMN is bound by residues 279 to 283 (DGGIR) and 302 to 303 (GR). The short motif at 351 to 353 (SRL) is the Microbody targeting signal element.

Belongs to the FMN-dependent alpha-hydroxy acid dehydrogenase family. In terms of assembly, homotetramer. Requires FMN as cofactor.

The protein localises to the peroxisome. The enzyme catalyses a (2S)-2-hydroxycarboxylate + O2 = a 2-oxocarboxylate + H2O2. It catalyses the reaction 2-hydroxyhexadecanoate + O2 = 2-oxohexadecanoate + H2O2. The catalysed reaction is 2-hydroxyoctanoate + O2 = 2-oxooctanoate + H2O2. The protein operates within lipid metabolism; fatty acid metabolism. Functionally, oxidase that catalyzes the oxidation of medium and long chain hydroxyacids such as 2-hydroxyhexadecanoate and 2-hydroxyoctanoate, to the correspondong 2-oxoacids. Its role in the oxidation of 2-hydroxy fatty acids may contribute to the general pathway of fatty acid alpha-oxidation. Active in vitro with the artificial electron acceptor 2,6-dichlorophenolindophenol (DCIP), but O2 is believed to be the physiological electron acceptor, leading to the production of H2O2. The polypeptide is 2-Hydroxyacid oxidase 2 (HAO2) (Bos taurus (Bovine)).